The following is a 302-amino-acid chain: Nucleotide-binding protein RHOS4_02640 (302 aa).

15-22 serves as a coordination point for ATP; the sequence is GPSGAGRT. 62-65 contacts GTP; that stretch reads DVRN.

Belongs to the RapZ-like family.

Displays ATPase and GTPase activities. This Cereibacter sphaeroides (strain ATCC 17023 / DSM 158 / JCM 6121 / CCUG 31486 / LMG 2827 / NBRC 12203 / NCIMB 8253 / ATH 2.4.1.) (Rhodobacter sphaeroides) protein is Nucleotide-binding protein RHOS4_02640.